The chain runs to 249 residues: Phosphoribosylaminoimidazole-succinocarboxamide synthase (249 aa).

It belongs to the SAICAR synthetase family.

The enzyme catalyses 5-amino-1-(5-phospho-D-ribosyl)imidazole-4-carboxylate + L-aspartate + ATP = (2S)-2-[5-amino-1-(5-phospho-beta-D-ribosyl)imidazole-4-carboxamido]succinate + ADP + phosphate + 2 H(+). The protein operates within purine metabolism; IMP biosynthesis via de novo pathway; 5-amino-1-(5-phospho-D-ribosyl)imidazole-4-carboxamide from 5-amino-1-(5-phospho-D-ribosyl)imidazole-4-carboxylate: step 1/2. The sequence is that of Phosphoribosylaminoimidazole-succinocarboxamide synthase from Chloroflexus aurantiacus (strain ATCC 29366 / DSM 635 / J-10-fl).